The chain runs to 372 residues: Molybdopterin synthase catalytic subunit (372 aa).

Substrate-binding positions include 101-102 (HR), Lys-117, and 124-126 (KKE).

This sequence belongs to the MoaE family. MOCS2B subfamily. As to quaternary structure, heterotetramer; composed of 2 small (Mocs2A) and 2 large (Mocs2B) subunits.

Its subcellular location is the cytoplasm. It carries out the reaction 2 [molybdopterin-synthase sulfur-carrier protein]-C-terminal-Gly-aminoethanethioate + cyclic pyranopterin phosphate + H2O = molybdopterin + 2 [molybdopterin-synthase sulfur-carrier protein]-C-terminal Gly-Gly + 2 H(+). It functions in the pathway cofactor biosynthesis; molybdopterin biosynthesis. Functionally, catalytic subunit of the molybdopterin synthase complex, a complex that catalyzes the conversion of precursor Z into molybdopterin. Acts by mediating the incorporation of 2 sulfur atoms from thiocarboxylated Mocs2A into precursor Z to generate a dithiolene group. This chain is Molybdopterin synthase catalytic subunit, found in Drosophila willistoni (Fruit fly).